The following is a 701-amino-acid chain: DNA ligase (701 aa).

NAD(+) is bound by residues 58–62 (DYEYD), 107–108 (SL), and Glu138. The active-site N6-AMP-lysine intermediate is the Lys140. Positions 161, 199, 323, and 347 each coordinate NAD(+). Zn(2+)-binding residues include Cys441, Cys444, Cys459, and Cys464. Residues 621–701 (EKRGKLAGLN…EEFLKMIGQQ (81 aa)) form the BRCT domain.

This sequence belongs to the NAD-dependent DNA ligase family. LigA subfamily. The cofactor is Mg(2+). Mn(2+) serves as cofactor.

The catalysed reaction is NAD(+) + (deoxyribonucleotide)n-3'-hydroxyl + 5'-phospho-(deoxyribonucleotide)m = (deoxyribonucleotide)n+m + AMP + beta-nicotinamide D-nucleotide.. Its function is as follows. DNA ligase that catalyzes the formation of phosphodiester linkages between 5'-phosphoryl and 3'-hydroxyl groups in double-stranded DNA using NAD as a coenzyme and as the energy source for the reaction. It is essential for DNA replication and repair of damaged DNA. The protein is DNA ligase of Sulfurihydrogenibium azorense (strain DSM 15241 / OCM 825 / Az-Fu1).